Consider the following 531-residue polypeptide: NADH-quinone oxidoreductase subunit N (531 aa).

14 consecutive transmembrane segments (helical) span residues 8 to 28 (VEYF…AGVL), 41 to 61 (AQVT…IVVA), 81 to 101 (ATLF…VFMA), 146 to 166 (GATQ…MMVF), 172 to 192 (LLTM…MCGL), 208 to 228 (FLLG…LYGA), 250 to 270 (ALAG…AVPF), 282 to 302 (PTPI…GALL), 318 to 338 (PVLW…AVNQ), 350 to 370 (VAHV…GLSA), 372 to 392 (LFYL…VGLV), 418 to 438 (IVGV…LTSG), 453 to 473 (GAVP…YFYV), and 500 to 520 (AAIA…QPVL).

Belongs to the complex I subunit 2 family. NDH-1 is composed of 14 different subunits. Subunits NuoA, H, J, K, L, M, N constitute the membrane sector of the complex.

Its subcellular location is the cell membrane. It catalyses the reaction a quinone + NADH + 5 H(+)(in) = a quinol + NAD(+) + 4 H(+)(out). NDH-1 shuttles electrons from NADH, via FMN and iron-sulfur (Fe-S) centers, to quinones in the respiratory chain. The immediate electron acceptor for the enzyme in this species is believed to be a menaquinone. Couples the redox reaction to proton translocation (for every two electrons transferred, four hydrogen ions are translocated across the cytoplasmic membrane), and thus conserves the redox energy in a proton gradient. The polypeptide is NADH-quinone oxidoreductase subunit N (Mycobacterium tuberculosis (strain CDC 1551 / Oshkosh)).